The primary structure comprises 503 residues: Maturase K (503 aa).

The protein belongs to the intron maturase 2 family. MatK subfamily.

The protein resides in the plastid. The protein localises to the chloroplast. In terms of biological role, usually encoded in the trnK tRNA gene intron. Probably assists in splicing its own and other chloroplast group II introns. This Rosa rugosa (Rugosa rose) protein is Maturase K.